The following is a 380-amino-acid chain: Cytochrome b (380 aa).

4 consecutive transmembrane segments (helical) span residues 34 to 54 (FGSLLGICLLTQILTGLLLAT), 78 to 99 (WLIRNLHANGASFFFICIYLHI), 114 to 134 (WNTGVILLLALMATAFVGYVL), and 179 to 199 (FFALHFLLPFMIAGLAFIHLT). 2 residues coordinate heme b: H84 and H98. 2 residues coordinate heme b: H183 and H197. A ubiquinone is bound at residue H202. 4 consecutive transmembrane segments (helical) span residues 227 to 247 (LKDILGFIIMFLPLTTLALFS), 289 to 309 (LGGVLALAASVLVLFLTPLLH), 321 to 341 (LSQLLFWTLVANLLILTWVGS), and 348 to 368 (FIIIGQLASLAYFTILLLLFP).

This sequence belongs to the cytochrome b family. In terms of assembly, the cytochrome bc1 complex contains 11 subunits: 3 respiratory subunits (MT-CYB, CYC1 and UQCRFS1), 2 core proteins (UQCRC1 and UQCRC2) and 6 low-molecular weight proteins (UQCRH/QCR6, UQCRB/QCR7, UQCRQ/QCR8, UQCR10/QCR9, UQCR11/QCR10 and a cleavage product of UQCRFS1). This cytochrome bc1 complex then forms a dimer. The cofactor is heme b.

The protein localises to the mitochondrion inner membrane. Component of the ubiquinol-cytochrome c reductase complex (complex III or cytochrome b-c1 complex) that is part of the mitochondrial respiratory chain. The b-c1 complex mediates electron transfer from ubiquinol to cytochrome c. Contributes to the generation of a proton gradient across the mitochondrial membrane that is then used for ATP synthesis. This is Cytochrome b (MT-CYB) from Uria lomvia (Thick-billed murre).